A 193-amino-acid chain; its full sequence is MPVWGGGNKCGACGRTVYHAEEVQCDGRSFHRCCFLCMVCRKNLDSTTVAIHDEEIYCKSCYGKKYGPKGYGYGQGAGTLNMDRGERLGIKPESAQPHRPTTNPNTSKFAQKYGGAEKCSRCGDSVYAAEKIIGAGKPWHKNCFRCAKCGKSLESTTLTEKEGEIYCKGCYAKNFGPKGFGYGQGAGALVHAQ.

Residues 10–61 (CGACGRTVYHAEEVQCDGRSFHRCCFLCMVCRKNLDSTTVAIHDEEIYCKSC) form the LIM zinc-binding 1 domain. Positions 64–69 (KKYGPK) match the Nuclear localization signal motif. Lys-91 is covalently cross-linked (Glycyl lysine isopeptide (Lys-Gly) (interchain with G-Cter in SUMO2)). N6-acetyllysine is present on residues Lys-112 and Lys-131. The 52-residue stretch at 119-170 (CSRCGDSVYAAEKIIGAGKPWHKNCFRCAKCGKSLESTTLTEKEGEIYCKGC) folds into the LIM zinc-binding 2 domain. An N6-acetyllysine; alternate modification is found at Lys-137. An N6-succinyllysine; alternate modification is found at Lys-137. The residue at position 161 (Lys-161) is an N6-acetyllysine.

As to quaternary structure, interacts with KAT14. The LIM domain 1 is necessary and sufficient for this interaction. Interacts with GLRX3.

The protein localises to the nucleus. Drastically down-regulated in response to PDGF-BB or cell injury, that promote smooth muscle cell proliferation and dedifferentiation. Seems to play a role in the development of the embryonic vascular system. The protein is Cysteine and glycine-rich protein 2 (Csrp2) of Mus musculus (Mouse).